The sequence spans 509 residues: Oligo-1,6-glucosidase (509 aa).

The active-site Nucleophile is Asp-198. Glu-254 acts as the Proton donor in catalysis.

Belongs to the glycosyl hydrolase 13 family.

It is found in the cytoplasm. The enzyme catalyses Hydrolysis of (1-&gt;6)-alpha-D-glucosidic linkages in some oligosaccharides produced from starch and glycogen by alpha-amylase, and in isomaltose.. The polypeptide is Oligo-1,6-glucosidase (malL) (Bacillus sp. (strain F5)).